Here is a 377-residue protein sequence, read N- to C-terminus: Early estrogen-induced gene 1 protein (377 aa).

The region spanning Ala-2–Leu-145 is the C2 NT-type domain. 3 stretches are compositionally biased toward polar residues: residues Lys-160–Met-173, Val-188–Leu-198, and Ser-222–Ile-234. The interval Lys-160–Asp-313 is disordered. The span at Thr-256–Thr-269 shows a compositional bias: low complexity. Basic and acidic residues predominate over residues Glu-274–Pro-285.

The protein belongs to the EEIG family.

The protein resides in the nucleus. It localises to the cytoplasm. May be involved in osteoclast differentiation. This Xenopus laevis (African clawed frog) protein is Early estrogen-induced gene 1 protein (eeig1).